We begin with the raw amino-acid sequence, 213 residues long: Large ribosomal subunit protein uL3 (213 aa).

The segment at 122 to 147 is disordered; that stretch reads AIKRHGQSRGPMAHGSRYHRRPGSMG.

Belongs to the universal ribosomal protein uL3 family. In terms of assembly, part of the 50S ribosomal subunit. Forms a cluster with proteins L14 and L19.

In terms of biological role, one of the primary rRNA binding proteins, it binds directly near the 3'-end of the 23S rRNA, where it nucleates assembly of the 50S subunit. This is Large ribosomal subunit protein uL3 from Geobacillus stearothermophilus (Bacillus stearothermophilus).